The chain runs to 205 residues: N-(5'-phosphoribosyl)anthranilate isomerase (205 aa).

It belongs to the TrpF family.

It carries out the reaction N-(5-phospho-beta-D-ribosyl)anthranilate = 1-(2-carboxyphenylamino)-1-deoxy-D-ribulose 5-phosphate. It functions in the pathway amino-acid biosynthesis; L-tryptophan biosynthesis; L-tryptophan from chorismate: step 3/5. In Thermotoga petrophila (strain ATCC BAA-488 / DSM 13995 / JCM 10881 / RKU-1), this protein is N-(5'-phosphoribosyl)anthranilate isomerase.